We begin with the raw amino-acid sequence, 159 residues long: Lipoprotein LpqH (159 aa).

Residues 1-21 (MKRGLTVAVAGAAILVAGLSG) form the signal peptide. The N-palmitoyl cysteine moiety is linked to residue Cys22. Cys22 carries the S-diacylglycerol cysteine lipid modification. The segment at 24–51 (SNKSTTGSGETTTAAGTTASPGAASGPK) is disordered. A compositionally biased stretch (low complexity) spans 27-49 (STTGSGETTTAAGTTASPGAASG).

The protein belongs to the mycobacterial 19 kDa antigen family. Post-translationally, modified by Lgt on Cys-22 with an S-linked diacylglycerol with a mixture of C16, C18 and C19 fatty acids, signal peptide is removed by LspA, modifed by Lnt with an amide-linked mixture of C16 and C19 fatty acids.

It is found in the cell membrane. Might be involved in ligand transport. A host TLR2 agonist, modifies host gene expression in response to pathogen. The chain is Lipoprotein LpqH (lpqH) from Mycobacterium bovis (strain ATCC BAA-935 / AF2122/97).